We begin with the raw amino-acid sequence, 204 residues long: Methylthioribulose-1-phosphate dehydratase (204 aa).

Residues His94 and His96 each contribute to the Zn(2+) site.

This sequence belongs to the aldolase class II family. MtnB subfamily. Zn(2+) serves as cofactor.

The catalysed reaction is 5-(methylsulfanyl)-D-ribulose 1-phosphate = 5-methylsulfanyl-2,3-dioxopentyl phosphate + H2O. The protein operates within amino-acid biosynthesis; L-methionine biosynthesis via salvage pathway; L-methionine from S-methyl-5-thio-alpha-D-ribose 1-phosphate: step 2/6. In terms of biological role, catalyzes the dehydration of methylthioribulose-1-phosphate (MTRu-1-P) into 2,3-diketo-5-methylthiopentyl-1-phosphate (DK-MTP-1-P). This Serratia proteamaculans (strain 568) protein is Methylthioribulose-1-phosphate dehydratase.